The sequence spans 1465 residues: DNA polymerase alpha catalytic subunit (1465 aa).

Disordered regions lie at residues 20–39 and 105–135; these read GSFAASRARREKKSKKGRQE and LEDDALDTCGKGSDGKAHRKDRKDVKKPSVT. Residues 26 to 35 show a composition bias toward basic residues; that stretch reads RARREKKSKK. At T180 the chain carries Phosphothreonine. Residues S192 and S215 each carry the phosphoserine modification. N6-acetyllysine is present on K230. Positions 261 to 297 are disordered; the sequence is DESMDTEKVDEKPVTAKTWDQETEPVERVEHEADPER. Basic and acidic residues-rich tracts occupy residues 265 to 274 and 285 to 297; these read DTEKVDEKPV and PVERVEHEADPER. The segment at 654 to 719 is DNA-binding; it reads RINECKVPYW…YHLSELVQQI (66 aa). The residue at position 974 (K974) is an N6-succinyllysine. Positions 1249–1380 are DNA-binding; it reads QFRVHQYHKD…NGPLCPVCMK (132 aa). Zn(2+)-binding residues include C1287, C1290, C1314, C1319, C1352, C1357, C1375, and C1378. The CysA-type zinc-finger motif lies at 1287–1317; the sequence is CPSCGTENIYDNVFEGSGLDMEPSLYRCSNV. The CysB motif signature appears at 1352–1378; sequence CEEPTCCSRLRRLPLHFSRNGPLCPVC.

This sequence belongs to the DNA polymerase type-B family. As to quaternary structure, component of the alpha DNA polymerase complex (also known as the alpha DNA polymerase-primase complex) consisting of four subunits: the catalytic subunit POLA1, the regulatory subunit POLA2, and the primase complex subunits PRIM1 and PRIM2 respectively. Within the complex, POLA1 directly interacts with PRIM2. Interacts with PARP1; this interaction functions as part of the control of replication fork progression. Interacts with MCM10 and WDHD1; these interactions recruit the polymerase alpha complex to the pre-replicative complex bound to DNA. Interacts with RPA1; this interaction stabilizes the replicative complex and reduces the misincorporation rate of DNA polymerase alpha by acting as a fidelity clamp. In terms of tissue distribution, expressed in those zones containing proliferating cells in the developing embryonic neocortex, as well as in the lateral and medial ganglionic eminences. After birth, expressed in cells that remain proliferating in the ventricular and subventricular zone of the striatum.

Its subcellular location is the nucleus. It localises to the cytoplasm. The protein localises to the cytosol. The enzyme catalyses DNA(n) + a 2'-deoxyribonucleoside 5'-triphosphate = DNA(n+1) + diphosphate. Functionally, catalytic subunit of the DNA polymerase alpha complex (also known as the alpha DNA polymerase-primase complex) which plays an essential role in the initiation of DNA synthesis. During the S phase of the cell cycle, the DNA polymerase alpha complex (composed of a catalytic subunit POLA1, a regulatory subunit POLA2 and two primase subunits PRIM1 and PRIM2) is recruited to DNA at the replicative forks via direct interactions with MCM10 and WDHD1. The primase subunit of the polymerase alpha complex initiates DNA synthesis by oligomerising short RNA primers on both leading and lagging strands. These primers are initially extended by the polymerase alpha catalytic subunit and subsequently transferred to polymerase delta and polymerase epsilon for processive synthesis on the lagging and leading strand, respectively. The reason this transfer occurs is because the polymerase alpha has limited processivity and lacks intrinsic 3' exonuclease activity for proofreading error, and therefore is not well suited for replicating long complexes. In the cytosol, responsible for a substantial proportion of the physiological concentration of cytosolic RNA:DNA hybrids, which are necessary to prevent spontaneous activation of type I interferon responses. The polypeptide is DNA polymerase alpha catalytic subunit (Pola1) (Mus musculus (Mouse)).